The primary structure comprises 567 residues: Type 2 DNA topoisomerase 6 subunit B (567 aa).

Residues N46, D78, 99-100 (TK), 109-116 (GQQGIGIS), and K472 contribute to the ATP site.

This sequence belongs to the TOP6B family. As to quaternary structure, homodimer. Heterotetramer of two Top6A and two Top6B chains.

It carries out the reaction ATP-dependent breakage, passage and rejoining of double-stranded DNA.. Functionally, relaxes both positive and negative superturns and exhibits a strong decatenase activity. This chain is Type 2 DNA topoisomerase 6 subunit B, found in Thermococcus kodakarensis (strain ATCC BAA-918 / JCM 12380 / KOD1) (Pyrococcus kodakaraensis (strain KOD1)).